Consider the following 183-residue polypeptide: Adenine phosphoribosyltransferase (183 aa).

The protein belongs to the purine/pyrimidine phosphoribosyltransferase family. In terms of assembly, homodimer.

The protein localises to the cytoplasm. It carries out the reaction AMP + diphosphate = 5-phospho-alpha-D-ribose 1-diphosphate + adenine. Its pathway is purine metabolism; AMP biosynthesis via salvage pathway; AMP from adenine: step 1/1. Catalyzes a salvage reaction resulting in the formation of AMP, that is energically less costly than de novo synthesis. The polypeptide is Adenine phosphoribosyltransferase (Escherichia fergusonii (strain ATCC 35469 / DSM 13698 / CCUG 18766 / IAM 14443 / JCM 21226 / LMG 7866 / NBRC 102419 / NCTC 12128 / CDC 0568-73)).